The primary structure comprises 40 residues: uncharacterized protein (40 aa).

This is an uncharacterized protein from Dictyostelium discoideum (Social amoeba).